The primary structure comprises 372 residues: Glutamate 5-kinase (372 aa).

Lysine 14 contributes to the ATP binding site. 3 residues coordinate substrate: serine 54, aspartate 141, and asparagine 153. 173–174 contributes to the ATP binding site; the sequence is TD. In terms of domain architecture, PUA spans 280 to 358; sequence RGTLVLDDGA…DAIESLLGYS (79 aa).

This sequence belongs to the glutamate 5-kinase family.

The protein resides in the cytoplasm. The enzyme catalyses L-glutamate + ATP = L-glutamyl 5-phosphate + ADP. It participates in amino-acid biosynthesis; L-proline biosynthesis; L-glutamate 5-semialdehyde from L-glutamate: step 1/2. Its function is as follows. Catalyzes the transfer of a phosphate group to glutamate to form L-glutamate 5-phosphate. The protein is Glutamate 5-kinase of Pseudomonas entomophila (strain L48).